A 96-amino-acid chain; its full sequence is UPF0235 protein YggU (96 aa).

The protein belongs to the UPF0235 family.

This chain is UPF0235 protein YggU, found in Escherichia coli O127:H6 (strain E2348/69 / EPEC).